The sequence spans 229 residues: Indole-3-glycerol phosphate synthase (229 aa).

It belongs to the TrpC family.

It carries out the reaction 1-(2-carboxyphenylamino)-1-deoxy-D-ribulose 5-phosphate + H(+) = (1S,2R)-1-C-(indol-3-yl)glycerol 3-phosphate + CO2 + H2O. It participates in amino-acid biosynthesis; L-tryptophan biosynthesis; L-tryptophan from chorismate: step 4/5. This is Indole-3-glycerol phosphate synthase from Pyrococcus abyssi (strain GE5 / Orsay).